Here is a 212-residue protein sequence, read N- to C-terminus: MIVIFLGPPGAGKGTQGKKIAKKIDLPHIAIGDIFRTIIKTSTSEAELINNYVRQGELIPNEIVNQVIKNFLLSSEYKNGYILDGYPRNLEQAKFFESFIKEKIKIIYFDVSGELLIKRILGRYSCKNCGKIYNRYFLQPKTDNVCDVCGSSTFDYRKDDNEEVIKKRIEVYKTETYPLIDYYKNSGNFYIVNGSKNEQEIEIDIQKILKIN.

Residue Gly-10–Thr-15 participates in ATP binding. The NMP stretch occupies residues Ala-30 to Ile-59. AMP-binding positions include Arg-36, Glu-57–Ile-59, Gly-85–Arg-88, and Gln-92. The tract at residues Gly-122–Asp-160 is LID. Arg-123 lines the ATP pocket. Cys-126 and Cys-129 together coordinate Zn(2+). Residue Ile-132–Tyr-133 participates in ATP binding. Positions 146 and 149 each coordinate Zn(2+). AMP contacts are provided by Arg-157 and Arg-168. ATP is bound at residue Lys-196.

Belongs to the adenylate kinase family. As to quaternary structure, monomer.

Its subcellular location is the cytoplasm. The catalysed reaction is AMP + ATP = 2 ADP. The protein operates within purine metabolism; AMP biosynthesis via salvage pathway; AMP from ADP: step 1/1. Its function is as follows. Catalyzes the reversible transfer of the terminal phosphate group between ATP and AMP. Plays an important role in cellular energy homeostasis and in adenine nucleotide metabolism. The protein is Adenylate kinase of Rickettsia peacockii (strain Rustic).